The sequence spans 107 residues: Proteinase inhibitor I-B (107 aa).

Positions 1-22 (MVKFAHVVAFLLLASLFQPLTA) are cleaved as a signal peptide. A propeptide spanning residues 23–39 (RDLEINVLQLDVSQSGC) is cleaved from the precursor.

It belongs to the protease inhibitor I13 (potato type I serine protease inhibitor) family.

Its subcellular location is the secreted. In Nicotiana tabacum (Common tobacco), this protein is Proteinase inhibitor I-B (TIMPA).